A 142-amino-acid polypeptide reads, in one-letter code: Large ribosomal subunit protein uL13 (142 aa).

Belongs to the universal ribosomal protein uL13 family. In terms of assembly, part of the 50S ribosomal subunit.

Its function is as follows. This protein is one of the early assembly proteins of the 50S ribosomal subunit, although it is not seen to bind rRNA by itself. It is important during the early stages of 50S assembly. The polypeptide is Large ribosomal subunit protein uL13 (Nitrosococcus oceani (strain ATCC 19707 / BCRC 17464 / JCM 30415 / NCIMB 11848 / C-107)).